We begin with the raw amino-acid sequence, 321 residues long: Methionine import ATP-binding protein MetN (321 aa).

Positions 2–237 (ISIKNVNKYY…NTKGLRKLIG (236 aa)) constitute an ABC transporter domain. 34–41 (GHSGAGKS) is a binding site for ATP.

It belongs to the ABC transporter superfamily. Methionine importer (TC 3.A.1.24) family. The complex is composed of two ATP-binding proteins (MetN), two transmembrane proteins (MetI) and a solute-binding protein (MetQ).

It is found in the cell membrane. The catalysed reaction is L-methionine(out) + ATP + H2O = L-methionine(in) + ADP + phosphate + H(+). The enzyme catalyses D-methionine(out) + ATP + H2O = D-methionine(in) + ADP + phosphate + H(+). Functionally, part of the ABC transporter complex MetNIQ involved in methionine import. Responsible for energy coupling to the transport system. The sequence is that of Methionine import ATP-binding protein MetN from Clostridioides difficile (strain 630) (Peptoclostridium difficile).